A 1117-amino-acid polypeptide reads, in one-letter code: Isoleucine--tRNA ligase (1117 aa).

The 'HIGH' region signature appears at 64–74 (PFANGLPHYGH). Residues 647 to 651 (KLSKR) carry the 'KMSKS' region motif. K650 is an ATP binding site.

The protein belongs to the class-I aminoacyl-tRNA synthetase family. IleS type 2 subfamily. In terms of assembly, monomer. Zn(2+) is required as a cofactor.

The protein localises to the cytoplasm. It carries out the reaction tRNA(Ile) + L-isoleucine + ATP = L-isoleucyl-tRNA(Ile) + AMP + diphosphate. In terms of biological role, catalyzes the attachment of isoleucine to tRNA(Ile). As IleRS can inadvertently accommodate and process structurally similar amino acids such as valine, to avoid such errors it has two additional distinct tRNA(Ile)-dependent editing activities. One activity is designated as 'pretransfer' editing and involves the hydrolysis of activated Val-AMP. The other activity is designated 'posttransfer' editing and involves deacylation of mischarged Val-tRNA(Ile). The protein is Isoleucine--tRNA ligase of Ehrlichia ruminantium (strain Welgevonden).